The chain runs to 2242 residues: Multifunctional protein CAD (2242 aa).

A GATase (Glutamine amidotransferase) region spans residues Met-1–Asn-365. 3 residues coordinate L-glutamine: Ser-44, Gly-222, and Gly-224. Residues Lys-177–Gly-363 form the Glutamine amidotransferase type-1 domain. Cys-252 (nucleophile; for GATase activity) is an active-site residue. 5 residues coordinate L-glutamine: Leu-253, Gln-256, Asn-294, Gly-296, and Phe-297. Residues His-336 and Glu-338 each act as for GATase activity in the active site. Residues Leu-366–His-397 form a linker region. Residues Lys-398–Lys-937 form a CPSase A region. Residues Lys-398–Ser-1462 form a CPSase (Carbamoyl-phosphate synthase) region. The ATP site is built by Arg-518, Arg-558, Gly-564, Gly-565, Lys-595, Glu-602, Gly-628, Ile-629, His-630, Gln-671, and Glu-685. ATP-grasp domains are found at residues Val-522–Leu-714 and Ser-1057–Met-1248. The Mg(2+) site is built by Gln-671, Glu-685, and Asn-687. Mn(2+) is bound by residues Gln-671, Glu-685, and Asn-687. The interval Pro-938–Ser-1462 is CPSase B. Residues Arg-1093, Lys-1132, Ile-1134, Glu-1139, Gly-1164, Val-1165, His-1166, Ser-1167, Gln-1207, and Glu-1219 each coordinate ATP. Gln-1207, Glu-1219, and Asn-1221 together coordinate Mg(2+). Mn(2+) contacts are provided by Gln-1207, Glu-1219, and Asn-1221. The MGS-like domain occupies Phe-1313–Ile-1469. The interval Met-1463–Arg-1796 is DHOase (dihydroorotase). His-1478 and His-1480 together coordinate Zn(2+). The (S)-dihydroorotate site is built by Arg-1482 and Asn-1512. Zn(2+)-binding residues include Lys-1563, His-1597, Cys-1620, His-1621, and Glu-1644. Position 1563 is an N6-carboxylysine (Lys-1563). (S)-dihydroorotate is bound at residue Arg-1668. Asp-1693 lines the Zn(2+) pocket. Asp-1693 functions as the For DHOase activity in the catalytic mechanism. The (S)-dihydroorotate site is built by His-1697 and Pro-1709. Residues Gly-1797–Leu-1934 form a linker region. The interval Pro-1829–Ala-1862 is disordered. Over residues Pro-1840 to Ala-1851 the composition is skewed to polar residues. The ATCase (Aspartate transcarbamylase) stretch occupies residues Leu-1935–Phe-2242. Carbamoyl phosphate is bound by residues Arg-1992 and Thr-1993. Lys-2020 provides a ligand contact to L-aspartate. Residues Arg-2041, His-2069, and Gln-2072 each coordinate carbamoyl phosphate. L-aspartate is bound by residues Arg-2102 and Arg-2163. Carbamoyl phosphate-binding residues include Leu-2202 and Pro-2203.

The protein in the N-terminal section; belongs to the CarA family. In the 2nd section; belongs to the CarB family. It in the 3rd section; belongs to the metallo-dependent hydrolases superfamily. DHOase family. CAD subfamily. This sequence in the C-terminal section; belongs to the aspartate/ornithine carbamoyltransferase superfamily. ATCase family. In terms of assembly, homohexamer. Mg(2+) is required as a cofactor. Mn(2+) serves as cofactor. The cofactor is Zn(2+). In terms of tissue distribution, present in the testis but not in the liver.

Its subcellular location is the cytoplasm. It is found in the nucleus. It catalyses the reaction hydrogencarbonate + L-glutamine + 2 ATP + H2O = carbamoyl phosphate + L-glutamate + 2 ADP + phosphate + 2 H(+). It carries out the reaction L-glutamine + H2O = L-glutamate + NH4(+). The catalysed reaction is hydrogencarbonate + NH4(+) + 2 ATP = carbamoyl phosphate + 2 ADP + phosphate + 2 H(+). The enzyme catalyses carbamoyl phosphate + L-aspartate = N-carbamoyl-L-aspartate + phosphate + H(+). It catalyses the reaction (S)-dihydroorotate + H2O = N-carbamoyl-L-aspartate + H(+). It functions in the pathway pyrimidine metabolism; UMP biosynthesis via de novo pathway; (S)-dihydroorotate from bicarbonate: step 1/3. Its pathway is pyrimidine metabolism; UMP biosynthesis via de novo pathway; (S)-dihydroorotate from bicarbonate: step 2/3. The protein operates within pyrimidine metabolism; UMP biosynthesis via de novo pathway; (S)-dihydroorotate from bicarbonate: step 3/3. With respect to regulation, allosterically regulated and controlled by phosphorylation. 5-phosphoribose 1-diphosphate is an activator while UMP is an inhibitor of the CPSase reaction. In terms of biological role, multifunctional protein that encodes the first 3 enzymatic activities of the de novo pyrimidine pathway: carbamoylphosphate synthetase (CPSase; EC 6.3.5.5), aspartate transcarbamylase (ATCase; EC 2.1.3.2) and dihydroorotase (DHOase; EC 3.5.2.3). The CPSase-function is accomplished in 2 steps, by a glutamine-dependent amidotransferase activity (GATase) that binds and cleaves glutamine to produce ammonia, followed by an ammonium-dependent carbamoyl phosphate synthetase, which reacts with the ammonia, hydrogencarbonate and ATP to form carbamoyl phosphate. The endogenously produced carbamoyl phosphate is sequestered and channeled to the ATCase active site. ATCase then catalyzes the formation of carbamoyl-L-aspartate from L-aspartate and carbamoyl phosphate. In the last step, DHOase catalyzes the cyclization of carbamoyl aspartate to dihydroorotate. In Squalus acanthias (Spiny dogfish), this protein is Multifunctional protein CAD (CAD).